Here is a 288-residue protein sequence, read N- to C-terminus: Acetyl-coenzyme A carboxylase carboxyl transferase subunit beta (288 aa).

In terms of domain architecture, CoA carboxyltransferase N-terminal spans 34 to 288; sequence LWVKCSRCNE…ANILSLHGTN (255 aa). 4 residues coordinate Zn(2+): Cys38, Cys41, Cys57, and Cys60. A C4-type zinc finger spans residues 38–60; it reads CSRCNEILYTKELDKNFKVCHKC.

This sequence belongs to the AccD/PCCB family. As to quaternary structure, acetyl-CoA carboxylase is a heterohexamer composed of biotin carboxyl carrier protein (AccB), biotin carboxylase (AccC) and two subunits each of ACCase subunit alpha (AccA) and ACCase subunit beta (AccD). Zn(2+) is required as a cofactor.

It localises to the cytoplasm. The enzyme catalyses N(6)-carboxybiotinyl-L-lysyl-[protein] + acetyl-CoA = N(6)-biotinyl-L-lysyl-[protein] + malonyl-CoA. Its pathway is lipid metabolism; malonyl-CoA biosynthesis; malonyl-CoA from acetyl-CoA: step 1/1. Its function is as follows. Component of the acetyl coenzyme A carboxylase (ACC) complex. Biotin carboxylase (BC) catalyzes the carboxylation of biotin on its carrier protein (BCCP) and then the CO(2) group is transferred by the transcarboxylase to acetyl-CoA to form malonyl-CoA. The chain is Acetyl-coenzyme A carboxylase carboxyl transferase subunit beta from Desulforamulus reducens (strain ATCC BAA-1160 / DSM 100696 / MI-1) (Desulfotomaculum reducens).